The sequence spans 547 residues: CTP synthase (547 aa).

The tract at residues M1–L267 is amidoligase domain. Residue S14 participates in CTP binding. S14 contacts UTP. ATP contacts are provided by residues S15 to L20 and D72. Mg(2+) is bound by residues D72 and E141. Residues D148–E150, K188–Q193, and K224 each bind CTP. UTP-binding positions include K188–Q193 and K224. A Glutamine amidotransferase type-1 domain is found at T292–G545. G354 lines the L-glutamine pocket. The active-site Nucleophile; for glutamine hydrolysis is the C381. Residues L382–Q385, E405, and R473 each bind L-glutamine. Residues H518 and E520 contribute to the active site.

Belongs to the CTP synthase family. Homotetramer.

The enzyme catalyses UTP + L-glutamine + ATP + H2O = CTP + L-glutamate + ADP + phosphate + 2 H(+). It carries out the reaction L-glutamine + H2O = L-glutamate + NH4(+). The catalysed reaction is UTP + NH4(+) + ATP = CTP + ADP + phosphate + 2 H(+). It functions in the pathway pyrimidine metabolism; CTP biosynthesis via de novo pathway; CTP from UDP: step 2/2. Its activity is regulated as follows. Allosterically activated by GTP, when glutamine is the substrate; GTP has no effect on the reaction when ammonia is the substrate. The allosteric effector GTP functions by stabilizing the protein conformation that binds the tetrahedral intermediate(s) formed during glutamine hydrolysis. Inhibited by the product CTP, via allosteric rather than competitive inhibition. Functionally, catalyzes the ATP-dependent amination of UTP to CTP with either L-glutamine or ammonia as the source of nitrogen. Regulates intracellular CTP levels through interactions with the four ribonucleotide triphosphates. This Nitratidesulfovibrio vulgaris (strain DP4) (Desulfovibrio vulgaris) protein is CTP synthase.